The primary structure comprises 458 residues: Phosphoglucosamine mutase (458 aa).

Residue Ser106 is the Phosphoserine intermediate of the active site. 4 residues coordinate Mg(2+): Ser106, Asp247, Asp249, and Asp251. Ser106 carries the phosphoserine modification.

This sequence belongs to the phosphohexose mutase family. It depends on Mg(2+) as a cofactor. Post-translationally, activated by phosphorylation.

It catalyses the reaction alpha-D-glucosamine 1-phosphate = D-glucosamine 6-phosphate. Its function is as follows. Catalyzes the conversion of glucosamine-6-phosphate to glucosamine-1-phosphate. The protein is Phosphoglucosamine mutase of Chlamydia trachomatis serovar A (strain ATCC VR-571B / DSM 19440 / HAR-13).